Reading from the N-terminus, the 576-residue chain is High-affinity choline transporter 1 (576 aa).

A helical membrane pass occupies residues 6–26 (GIVAIVFFYVLILVVGIWAGR). Over 27 to 51 (KSKSSKELESEAGAATEEVMLAGRN) the chain is Cytoplasmic. Residues 52-72 (IGTLVGIFTMTATWVGGAYIN) traverse the membrane as a helical segment. The Extracellular portion of the chain corresponds to 73–82 (GTAEALYNGG). A helical membrane pass occupies residues 83 to 103 (LLGCQAPVGYAISLVMGGLLF). Over 104 to 126 (AKKMREEGYITMLDPFQHKYGQR) the chain is Cytoplasmic. A helical membrane pass occupies residues 127-147 (IGGLMYVPALLGETFWTAAIL). Over 148 to 165 (SALGATLSVILGIDMNAS) the chain is Extracellular. A helical membrane pass occupies residues 166 to 186 (VTLSACIAVFYTFTGGYYAVA). Over 187–192 (YTDVVQ) the chain is Cytoplasmic. The chain crosses the membrane as a helical span at residues 193-213 (LFCIFVGLWVCVPAAMVHDGA). Residues 214–233 (KDISRNAGDWIGEIGGFKET) are Extracellular-facing. Residues 234–254 (SLWIDCMLLLVFGGIPWQVYF) form a helical membrane-spanning segment. Residues 255–270 (QRVLSSKTAHGAQTLS) are Cytoplasmic-facing. The helical transmembrane segment at 271 to 291 (FVAGVGCILMAIPPALIGAIA) threads the bilayer. The Extracellular segment spans residues 292 to 319 (RNTDWRMTDYSPWNNGTKVESIPPDKRN). An N-linked (GlcNAc...) asparagine glycan is attached at Asn-306. A helical transmembrane segment spans residues 320–340 (MVVPLVFQYLTPRWVAFIGLG). The Cytoplasmic portion of the chain corresponds to 341–378 (AVSAAVMSSADSSVLSAASMFAHNIWKLTIRPHASEKE). Residues 379–399 (VIIVMRIAIICVGIMATIMAL) traverse the membrane as a helical segment. Residues 400–408 (TIQSIYGLW) lie on the Extracellular side of the membrane. The helical transmembrane segment at 409–429 (YLCADLVYVILFPQLLCVVYM) threads the bilayer. Topologically, residues 430-437 (PRSNTYGS) are cytoplasmic. The helical transmembrane segment at 438 to 458 (LAGYAVGLVLRLIGGEPLVSL) threads the bilayer. The Extracellular segment spans residues 459–478 (PAFFHYPMYTDGVQYFPFRT). Residues 479-499 (TAMLSSMATIYIVSIQSEKLF) traverse the membrane as a helical segment. Residues 500 to 576 (KSGRLSPEWD…DQSYYSTNSN (77 aa)) are Cytoplasmic-facing. The segment at 541-576 (APNGTPAPVHPNQQPSDENTLLHPYSDQSYYSTNSN) is disordered. Polar residues predominate over residues 566–576 (SDQSYYSTNSN).

The protein belongs to the sodium:solute symporter (SSF) (TC 2.A.21) family. Detected in the nervous system, including the nerve ring and cholinergic motor neurons of the ventral nerve cord.

Its subcellular location is the membrane. Its function is as follows. Imports choline from the extracellular space to the neuron with high affinity. Choline uptake is the rate-limiting step in acetylcholine synthesis. Sodium ion and chloride ion dependent. This is High-affinity choline transporter 1 (cho-1) from Caenorhabditis elegans.